A 382-amino-acid polypeptide reads, in one-letter code: V-type proton ATPase subunit C 1 (382 aa).

T2 carries the N-acetylthreonine modification.

This sequence belongs to the V-ATPase C subunit family. As to quaternary structure, V-ATPase is a heteromultimeric enzyme made up of two complexes: the ATP-hydrolytic V1 complex and the proton translocation V0 complex. The V1 complex consists of three catalytic AB heterodimers that form a heterohexamer, three peripheral stalks each consisting of EG heterodimers, one central rotor including subunits D and F, and the regulatory subunits C and H. The proton translocation complex V0 consists of the proton transport subunit a, a ring of proteolipid subunits c9c'', rotary subunit d, subunits e and f, and two accessory subunits.

Functionally, subunit of the V1 complex of vacuolar(H+)-ATPase (V-ATPase), a multisubunit enzyme composed of a peripheral complex (V1) that hydrolyzes ATP and a membrane integral complex (V0) that translocates protons. V-ATPase is responsible for acidifying and maintaining the pH of intracellular compartments and in some cell types, is targeted to the plasma membrane, where it is responsible for acidifying the extracellular environment. Subunit C is necessary for the assembly of the catalytic sector of the enzyme and is likely to have a specific function in its catalytic activity. The chain is V-type proton ATPase subunit C 1 (atp6v1c1) from Xenopus tropicalis (Western clawed frog).